Consider the following 396-residue polypeptide: 8-amino-7-oxononanoate synthase (396 aa).

Arg21 provides a ligand contact to substrate. A pyridoxal 5'-phosphate-binding site is contributed by 108–109 (GY). His133 is a substrate binding site. 3 residues coordinate pyridoxal 5'-phosphate: Ser179, His207, and Thr236. Lys239 is subject to N6-(pyridoxal phosphate)lysine. Position 353 (Thr353) interacts with substrate.

The protein belongs to the class-II pyridoxal-phosphate-dependent aminotransferase family. BioF subfamily. In terms of assembly, homodimer. The cofactor is pyridoxal 5'-phosphate.

It carries out the reaction 6-carboxyhexanoyl-[ACP] + L-alanine + H(+) = (8S)-8-amino-7-oxononanoate + holo-[ACP] + CO2. The protein operates within cofactor biosynthesis; biotin biosynthesis. In terms of biological role, catalyzes the decarboxylative condensation of pimeloyl-[acyl-carrier protein] and L-alanine to produce 8-amino-7-oxononanoate (AON), [acyl-carrier protein], and carbon dioxide. This chain is 8-amino-7-oxononanoate synthase, found in Hahella chejuensis (strain KCTC 2396).